Consider the following 451-residue polypeptide: Velvet complex subunit 2 (451 aa).

Disordered regions lie at residues 1–95, 205–312, and 426–451; these read MNTT…PRSI, PGQS…QTNP, and PIRK…DDDY. Polar residues-rich tracts occupy residues 18–28, 40–62, and 205–217; these read TMPSLHDTTYR, MPQT…NSLP, and PGQS…SPTY. In terms of domain architecture, Velvet spans 92–428; it reads PRSITVDGRK…ATQGIKIPIR (337 aa). The span at 267 to 283 shows a compositional bias: low complexity; that stretch reads PQQSNYYYPQPSQSIPS. Positions 427–445 are enriched in basic and acidic residues; the sequence is IRKDGKDGPGKGGKDGSRG.

Belongs to the velvet family. VelB subfamily. In terms of assembly, component of the heterotrimeric velvet complex composed of LAE1, VEL1 and VEL2; VEL1 acting as a bridging protein between LAE1 and VEL2. Forms a heterodimeric complex with VOS1; the formation of the VEL2-VOS1 complex is light-dependent.

The protein localises to the nucleus. It is found in the cytoplasm. Component of the velvet transcription factor complex that controls sexual/asexual developmental ratio in response to light, promoting sexual development in the darkness while stimulating asexual sporulation under illumination. The velvet complex acts as a global regulator for secondary metabolite gene expression. Component of the VEL2-VOS1 heterodimeric complex that plays a dual role in activating genes associated with spore maturation and repressing certain development-associated genes. The VEL2-VOS1 complex binds DNA through the DNA-binding domain of VOS1 that recognizes an 11-nucleotide consensus sequence 5'-CTGGCCGCGGC-3' consisting of two motifs in the promoters of key developmental regulatory genes. Controls the expression of the oxalic acid and melanin gene clusters. Involved in the resistance to oxidative stress. Required for full virulence. This is Velvet complex subunit 2 from Botryotinia fuckeliana (strain B05.10) (Noble rot fungus).